Consider the following 200-residue polypeptide: Pyrrolidone-carboxylate peptidase (200 aa).

Residues Glu-78, Cys-141, and His-165 contribute to the active site.

This sequence belongs to the peptidase C15 family. In terms of assembly, homotetramer.

It localises to the cytoplasm. It catalyses the reaction Release of an N-terminal pyroglutamyl group from a polypeptide, the second amino acid generally not being Pro.. Removes 5-oxoproline from various penultimate amino acid residues except L-proline. The polypeptide is Pyrrolidone-carboxylate peptidase (Lactobacillus helveticus (strain DPC 4571)).